Reading from the N-terminus, the 178-residue chain is Colicin-A immunity protein (178 aa).

Residues 1 to 13 are Cytoplasmic-facing; sequence MMNEHSIDTDNRK. Residues 14 to 37 form a helical membrane-spanning segment; that stretch reads ANNALYLFIIIGLIPLLCIFVVYY. Residues 38–68 lie on the Periplasmic side of the membrane; sequence KTPDALLLRKIATSTENLPSITSSYNPLMTK. The helical transmembrane segment at 69–89 threads the bilayer; the sequence is VMDIYCKTAPFLALILYILTF. At 90-105 the chain is on the cytoplasmic side; sequence KIRKLINNTDRNTVLR. The chain crosses the membrane as a helical span at residues 106–123; that stretch reads SCLLSPLVYAAIVYLFCF. The Periplasmic segment spans residues 124 to 142; sequence RNFELTTAGRPVRLMATND. Residues 143–165 traverse the membrane as a helical segment; the sequence is ATLLLFYIGLYSIIFFTTYITLF. Over 166–178 the chain is Cytoplasmic; it reads TPVTAFKLLKKRQ.

It is found in the cell inner membrane. Functionally, this protein is able to protect a cell, which harbors the plasmid ColA encoding colicin A, against colicin A. This chain is Colicin-A immunity protein (cai), found in Citrobacter freundii.